The following is a 284-amino-acid chain: MATAVRGLKLQTEDYFLTDKNVVMVAERHPQPVFPLHHHDFDELVIVWRGNGLHLWNDVPYRITRGDMFYVSANDRHSYESVHGLELDNILYIRNRLTLSADWQRLLPGGEHPQSQRHWCLGSEGMDTLREKVDALRQECMKSDALSLQLSEALLLQIALLAARYRHTPDNPQLADAHQLDMLMNALRASIAAPFRFEAFCEQHHFSARSLRSRFKEQTGMSVPHYLRQLRLCKAMELLRYDLQTIGDIAALCGFEDSNYFSVVFHQAFGVSPSAYRQRFLNVE.

The 99-residue stretch at 181-279 (DMLMNALRAS…GVSPSAYRQR (99 aa)) folds into the HTH araC/xylS-type domain. 2 DNA-binding regions (H-T-H motif) span residues 198-219 (EAFC…KEQT) and 246-269 (IGDI…HQAF).

As to quaternary structure, binds DNA as a dimer.

It localises to the cytoplasm. Its function is as follows. Activates expression of the rhaSR operon in response to L-rhamnose. In Pectobacterium carotovorum subsp. carotovorum (strain PC1), this protein is HTH-type transcriptional activator RhaR.